The primary structure comprises 1135 residues: Potassium channel subfamily T member 2 (1135 aa).

At 1-63 (MVDLESEVPP…KNQRSSLRIR (63 aa)) the chain is on the cytoplasmic side. Residues 64–84 (LFNFSLKLLSCLLYIIRVLLE) traverse the membrane as a helical segment. Topologically, residues 85–101 (NPSQGNEWSHIFWVNRS) are extracellular. A glycan (N-linked (GlcNAc...) asparagine) is linked at Asn99. Residues 102-122 (LPLWGLQVSVALISLFETILL) form a helical membrane-spanning segment. Residues 123-137 (GYLSYKGNIWEQILR) are Cytoplasmic-facing. Residues 138-158 (IPFILEIINAVPFIISIFWPS) form a helical membrane-spanning segment. Residues 159-164 (LRNLFV) lie on the Extracellular side of the membrane. A helical membrane pass occupies residues 165–185 (PVFLNCWLAKHALENMINDLH). The Cytoplasmic segment spans residues 186–198 (RAIQRTQSAMFNQ). The chain crosses the membrane as a helical span at residues 199–219 (VLILISTLLCLIFTCICGIQH). Topologically, residues 220–228 (LERIGKKLN) are extracellular. Residues 229–249 (LFDSLYFCIVTFSTVGFGDVT) constitute an intramembrane region (pore-forming). Residues 250–256 (PETWSSK) are Extracellular-facing. Residues 257–277 (LFVVAMICVALVVLPIQFEQL) traverse the membrane as a helical segment. The Cytoplasmic portion of the chain corresponds to 278-1135 (AYLWMERQKS…GQDSREETQL (858 aa)). RCK N-terminal domains follow at residues 299-435 (EKHV…DHVV) and 718-858 (NKLI…CYSL). 3 disordered regions span residues 977-1010 (VEEWEDTKDSKEQGHHRSNHRNSTSSDQSDHPLL), 1017-1036 (WARRLSRKGPKHSGKTAEKI), and 1113-1135 (SEPSRRNSICNVTGQDSREETQL). Residues 1017–1030 (WARRLSRKGPKHSG) show a composition bias toward basic residues. Over residues 1118–1127 (RNSICNVTGQ) the composition is skewed to polar residues.

This sequence belongs to the potassium channel family. Calcium-activated (TC 1.A.1.3) subfamily. KCa4.2/KCNT2 sub-subfamily. In terms of assembly, homotetramer. Forms heteromeric channels with KCNT1; these heterodimer channels differ from the homomers in their unitary conductance, kinetic behavior, subcellular localization, and response to activation of protein kinase C. Post-translationally, phosphorylated by protein kinase C. Phosphorylation of the C-terminal domain inhibits channel activity.

Its subcellular location is the cell membrane. It carries out the reaction K(+)(in) = K(+)(out). Are normally in a closed state unless activated by an increase in intracellular Na(+) and Cl(-). Inhibited upon stimulation of G-protein coupled receptors, such as CHRM1 and GRM1. There is conflicting data about the effect of ATP on KNCT2 channels activity. Intracellular ATP was initially report to inhibit the channel activity. However, others studies conclude that KNCT2 channels are not inhibited by intracellular ATP. Functionally, sodium-activated and chloride-activated potassium channel. Produces rapidly activating outward rectifier K(+) currents. Contributes to regulate neuronal excitability. The sequence is that of Potassium channel subfamily T member 2 (KCNT2) from Homo sapiens (Human).